A 343-amino-acid chain; its full sequence is UPF0324 membrane protein LJ_1117 (343 aa).

The next 10 membrane-spanning stretches (helical) occupy residues 10 to 27 (FGLAAVMTLICSVAGIFL), 32 to 54 (YVNLIGALVIALLLGISLQVLPV), 64 to 86 (IGFISNKFLRLGIILLGFRLNLT), 91 to 113 (AGIKTILVAMLGVSGTIVLTYWL), 123 to 145 (LAVLSACGCGICGAAAVMGVSPQ), 157 to 179 (NEVLAVAVVCVMGTVFTLLEIVI), 219 to 241 (ALIMKLSRVLLLAPVALIIGYWY), 262 to 284 (IPWFLGGFILTSILGTFLPFPPV), 288 to 310 (GLVQAAYVFLGMAMAALGISVNF), and 317 to 339 (GGTVFGAAAISSTCLMIFMIIMS).

The protein belongs to the UPF0324 family.

The protein resides in the cell membrane. The polypeptide is UPF0324 membrane protein LJ_1117 (Lactobacillus johnsonii (strain CNCM I-12250 / La1 / NCC 533)).